The primary structure comprises 546 residues: CTP synthase (546 aa).

The tract at residues M1–I266 is amidoligase domain. S14 provides a ligand contact to CTP. UTP is bound at residue S14. ATP-binding positions include S15–I20 and D72. Positions 72 and 140 each coordinate Mg(2+). CTP-binding positions include D147 to E149, K187 to Q192, and K223. UTP-binding positions include K187 to Q192 and K223. Residue R239–V241 coordinates ATP. The Glutamine amidotransferase type-1 domain occupies T291–G542. G352 contributes to the L-glutamine binding site. C379 (nucleophile; for glutamine hydrolysis) is an active-site residue. L-glutamine contacts are provided by residues L380 to Q383, E403, and R470. Active-site residues include H515 and E517.

This sequence belongs to the CTP synthase family. As to quaternary structure, homotetramer.

It carries out the reaction UTP + L-glutamine + ATP + H2O = CTP + L-glutamate + ADP + phosphate + 2 H(+). The enzyme catalyses L-glutamine + H2O = L-glutamate + NH4(+). It catalyses the reaction UTP + NH4(+) + ATP = CTP + ADP + phosphate + 2 H(+). Its pathway is pyrimidine metabolism; CTP biosynthesis via de novo pathway; CTP from UDP: step 2/2. Allosterically activated by GTP, when glutamine is the substrate; GTP has no effect on the reaction when ammonia is the substrate. The allosteric effector GTP functions by stabilizing the protein conformation that binds the tetrahedral intermediate(s) formed during glutamine hydrolysis. Inhibited by the product CTP, via allosteric rather than competitive inhibition. In terms of biological role, catalyzes the ATP-dependent amination of UTP to CTP with either L-glutamine or ammonia as the source of nitrogen. Regulates intracellular CTP levels through interactions with the four ribonucleotide triphosphates. This Vibrio atlanticus (strain LGP32) (Vibrio splendidus (strain Mel32)) protein is CTP synthase.